Consider the following 328-residue polypeptide: Biotin synthase (328 aa).

The Radical SAM core domain occupies 53–282 (FHGNRVDLCA…ATTIRYAGGR (230 aa)). 3 residues coordinate [4Fe-4S] cluster: Cys71, Cys75, and Cys78. [2Fe-2S] cluster-binding residues include Ser115, Cys147, Cys207, and Arg277.

The protein belongs to the radical SAM superfamily. Biotin synthase family. As to quaternary structure, homodimer. The cofactor is [4Fe-4S] cluster. [2Fe-2S] cluster is required as a cofactor.

It carries out the reaction (4R,5S)-dethiobiotin + (sulfur carrier)-SH + 2 reduced [2Fe-2S]-[ferredoxin] + 2 S-adenosyl-L-methionine = (sulfur carrier)-H + biotin + 2 5'-deoxyadenosine + 2 L-methionine + 2 oxidized [2Fe-2S]-[ferredoxin]. The protein operates within cofactor biosynthesis; biotin biosynthesis; biotin from 7,8-diaminononanoate: step 2/2. Its function is as follows. Catalyzes the conversion of dethiobiotin (DTB) to biotin by the insertion of a sulfur atom into dethiobiotin via a radical-based mechanism. In Desulforudis audaxviator (strain MP104C), this protein is Biotin synthase.